The following is a 292-amino-acid chain: AKT-interacting protein homolog B (292 aa).

A disordered region spans residues 1-44; the sequence is MNPFWNMPSASVRKRSDNDEKIATADQKISPARSSSAKKQLPSI. A compositionally biased stretch (basic and acidic residues) spans 14 to 23; it reads KRSDNDEKIA. The UBC core domain maps to 75-223; sequence YLEYSLLAEF…VVDSVKLCNS (149 aa).

The protein belongs to the ubiquitin-conjugating enzyme family. FTS subfamily.

The protein localises to the cytoplasm. The protein resides in the cell membrane. Its function is as follows. May function to promote vesicle trafficking and/or fusion. May also regulate apoptosis. This chain is AKT-interacting protein homolog B (aktip-b), found in Xenopus laevis (African clawed frog).